We begin with the raw amino-acid sequence, 175 residues long: Adenine phosphoribosyltransferase (175 aa).

This sequence belongs to the purine/pyrimidine phosphoribosyltransferase family. As to quaternary structure, homodimer.

It localises to the cytoplasm. It carries out the reaction AMP + diphosphate = 5-phospho-alpha-D-ribose 1-diphosphate + adenine. It participates in purine metabolism; AMP biosynthesis via salvage pathway; AMP from adenine: step 1/1. Functionally, catalyzes a salvage reaction resulting in the formation of AMP, that is energically less costly than de novo synthesis. This Lactobacillus johnsonii (strain CNCM I-12250 / La1 / NCC 533) protein is Adenine phosphoribosyltransferase.